An 84-amino-acid chain; its full sequence is Dolichol phosphate-mannose biosynthesis regulatory protein (84 aa).

2 consecutive transmembrane segments (helical) span residues 11–31 and 49–69; these read FGLVAVSLIIFTYYTTWVILL and YAVLIPLATGLLLLLFVGLFI.

It belongs to the DPM2 family. Component of the dolichol-phosphate mannose (DPM) synthase complex composed of DPM1, DPM2 and DPM3; in the complex interacts directly with DPM3. Component of the glycosylphosphatidylinositol-N-acetylglucosaminyltransferase (GPI-GnT) complex composed at least by PIGA, PIGC, PIGH, PIGP, PIGQ, PIGY and DPM2. Interacts with PIGA, PIGC and PIGQ.

It localises to the endoplasmic reticulum membrane. It functions in the pathway protein modification; protein glycosylation. Its function is as follows. Regulates the biosynthesis of dolichol phosphate-mannose. Regulatory subunit of the dolichol-phosphate mannose (DPM) synthase complex; essential for the ER localization and stable expression of DPM1. Part of the glycosylphosphatidylinositol-N-acetylglucosaminyltransferase (GPI-GnT) complex that catalyzes the transfer of N-acetylglucosamine from UDP-N-acetylglucosamine to phosphatidylinositol and participates in the first step of GPI biosynthesis. May act by regulating the GPI-GNT complex. The chain is Dolichol phosphate-mannose biosynthesis regulatory protein from Cricetulus griseus (Chinese hamster).